A 97-amino-acid polypeptide reads, in one-letter code: NADH dehydrogenase [ubiquinone] 1 alpha subcomplex subunit 2 (97 aa).

A disulfide bridge connects residues cysteine 19 and cysteine 53.

It belongs to the complex I NDUFA2 subunit family. Complex I is composed of at least 49 different subunits.

The protein localises to the mitochondrion inner membrane. In terms of biological role, accessory subunit of the mitochondrial membrane respiratory chain NADH dehydrogenase (Complex I), that is believed not to be involved in catalysis. Complex I functions in the transfer of electrons from NADH to the respiratory chain. The immediate electron acceptor for the enzyme is believed to be ubiquinone. The protein is NADH dehydrogenase [ubiquinone] 1 alpha subcomplex subunit 2 of Arabidopsis thaliana (Mouse-ear cress).